Reading from the N-terminus, the 132-residue chain is Flagellar assembly factor FliW (132 aa).

It belongs to the FliW family. As to quaternary structure, interacts with translational regulator CsrA and flagellin(s).

The protein resides in the cytoplasm. Its function is as follows. Acts as an anti-CsrA protein, binds CsrA and prevents it from repressing translation of its target genes, one of which is flagellin. Binds to flagellin and participates in the assembly of the flagellum. This chain is Flagellar assembly factor FliW, found in Borreliella afzelii (strain PKo) (Borrelia afzelii).